The following is a 262-amino-acid chain: Apolipoprotein A-I-2 (262 aa).

The N-terminal stretch at 1 to 18 is a signal peptide; it reads MQFLALALTILLAAATQA. The segment at 32 to 63 is 3 X approximate tandem repeats; that stretch reads VKVAMMEYMAQVKETAQRSIDHLDDTEYKEYK. 2 tandem repeats follow at residues 64-85 and 87-107. The segment at 64–262 is 10 X approximate tandem repeats; the sequence is VQLSQSLDNL…YETISQAMKA (199 aa). One copy of the 3; half-length repeat lies at 108 to 118; it reads KDVEELRSQLE. 5 tandem repeats follow at residues 119-140, 141-162, 163-184, 185-206, and 207-228. The 9; half-length repeat unit spans residues 229-239; it reads PLTTDFKGQLG. Residues 240–262 form repeat 10; that stretch reads PAAEQAKEKLMALYETISQAMKA.

This sequence belongs to the apolipoprotein A1/A4/E family.

It localises to the secreted. Its function is as follows. Participates in the reverse transport of cholesterol from tissues to the liver for excretion by promoting cholesterol efflux from tissues and by acting as a cofactor for the lecithin cholesterol acyltransferase (LCAT). The chain is Apolipoprotein A-I-2 from Oncorhynchus mykiss (Rainbow trout).